The primary structure comprises 297 residues: Bax inhibitor 1 (297 aa).

Over 1-53 (MSGPPPPYEEQSSHLYGQPASSQDGNAFIPEDFKYSTVVISCEPIIRQRFMHK) the chain is Lumenal. The helical transmembrane segment at 54 to 74 (VYSLLSCQLLASLSFCYWASV) threads the bilayer. Residues 75 to 85 (STSLQNFIMSH) are Cytoplasmic-facing. The helical transmembrane segment at 86 to 106 (IALFYICMVVSLVSCIWLAVS) threads the bilayer. Residues 107 to 146 (PRPEDYEASVPEPLLTGSSEEPAQEQRRLPWYVLSSYKQK) lie on the Lumenal side of the membrane. Residues 147–167 (LTLLSIFTLSEAYCLSLVTLA) traverse the membrane as a helical segment. Residues 168–171 (YDKD) lie on the Cytoplasmic side of the membrane. The chain crosses the membrane as a helical span at residues 172-192 (TVLSALLITTIVVVGVSLTAL). Topologically, residues 193–208 (SERFENVLNSATSIYY) are lumenal. Residues 209–229 (WLNWGLWIMIGMGLTALLFGW) form a helical membrane-spanning segment. At 230-239 (NTHSSKFNLL) the chain is on the cytoplasmic side. A helical transmembrane segment spans residues 240-260 (YGWLGAILFTAYLFIDTQLIF). Topologically, residues 261–270 (RKVYPDEEVR) are lumenal. The chain crosses the membrane as a helical span at residues 271-291 (CAMMLYLDIVNLFLSILRILA). Residues 292 to 297 (NSNDDN) are Cytoplasmic-facing.

Belongs to the BI1 family. LFG subfamily.

It is found in the endoplasmic reticulum membrane. Its subcellular location is the vacuole membrane. The protein localises to the mitochondrion membrane. In terms of biological role, links the unfolded protein response and programmed cell death and mediates mitochondrial-dependent apoptosis. Induces cell death and disruption of the mitochondrial transmembrane potential via the mitochondrial phosphate carrier MIR1. Dispensible for starvation-induced autophagy. The polypeptide is Bax inhibitor 1 (BXI1) (Saccharomyces cerevisiae (strain ATCC 204508 / S288c) (Baker's yeast)).